A 210-amino-acid polypeptide reads, in one-letter code: Tetraspanin-31 (210 aa).

Topologically, residues 1–12 are cytoplasmic; that stretch reads MVCGGFACSRNA. A helical membrane pass occupies residues 13 to 33; it reads LCALNVVYMLVGFLLIGVAAW. At 34 to 44 the chain is on the extracellular side; it reads GKGLGVVSSIH. A helical transmembrane segment spans residues 45 to 65; the sequence is IIGGVIAVGVFLLLIAVAGLV. Residues 66–72 lie on the Cytoplasmic side of the membrane; it reads GAANHHQ. A helical membrane pass occupies residues 73–93; that stretch reads VLLFFYMIILGLVFIFQFGIS. Over 94 to 173 the chain is Extracellular; sequence CSCLAINRNT…FLKHSDKALK (80 aa). N-linked (GlcNAc...) asparagine glycans are attached at residues N109, N117, and N134. A helical membrane pass occupies residues 174 to 194; it reads ILGGVGLFFSFTEILGVWLAM. Topologically, residues 195–210 are cytoplasmic; sequence RFRNQKDPRANPSAFL.

This sequence belongs to the tetraspanin (TM4SF) family.

The protein resides in the membrane. This chain is Tetraspanin-31 (Tspan31), found in Mus musculus (Mouse).